The chain runs to 424 residues: Deoxyguanosinetriphosphate triphosphohydrolase-like protein (424 aa).

Over residues 1–10 (MEGTAPPTPY) the composition is skewed to pro residues. The tract at residues 1 to 31 (MEGTAPPTPYDPASVARYAPEPDKRPGRTAF) is disordered. Basic and acidic residues predominate over residues 20–31 (PEPDKRPGRTAF). In terms of domain architecture, HD spans 70-220 (RLTHSLECAQ…MDWADDVAYS (151 aa)).

It belongs to the dGTPase family. Type 2 subfamily.

The sequence is that of Deoxyguanosinetriphosphate triphosphohydrolase-like protein from Streptomyces coelicolor (strain ATCC BAA-471 / A3(2) / M145).